The chain runs to 324 residues: Beta-ketoacyl-[acyl-carrier-protein] synthase III (324 aa).

Catalysis depends on residues C114 and H246. The tract at residues 247–251 (QANLR) is ACP-binding. Residue N276 is part of the active site.

The protein belongs to the thiolase-like superfamily. FabH family. In terms of assembly, homodimer.

The protein localises to the cytoplasm. The enzyme catalyses malonyl-[ACP] + acetyl-CoA + H(+) = 3-oxobutanoyl-[ACP] + CO2 + CoA. It participates in lipid metabolism; fatty acid biosynthesis. Functionally, catalyzes the condensation reaction of fatty acid synthesis by the addition to an acyl acceptor of two carbons from malonyl-ACP. Catalyzes the first condensation reaction which initiates fatty acid synthesis and may therefore play a role in governing the total rate of fatty acid production. Possesses both acetoacetyl-ACP synthase and acetyl transacylase activities. Its substrate specificity determines the biosynthesis of branched-chain and/or straight-chain of fatty acids. The sequence is that of Beta-ketoacyl-[acyl-carrier-protein] synthase III from Campylobacter jejuni subsp. jejuni serotype O:2 (strain ATCC 700819 / NCTC 11168).